The primary structure comprises 480 residues: Protein nucleotidyltransferase YdiU (480 aa).

The ATP site is built by Gly86, Gly88, Arg89, Lys109, Asp121, Gly122, Arg172, and Arg179. The active-site Proton acceptor is the Asp248. 2 residues coordinate Mg(2+): Asn249 and Asp258. Position 258 (Asp258) interacts with ATP.

The protein belongs to the SELO family. The cofactor is Mg(2+). It depends on Mn(2+) as a cofactor.

The catalysed reaction is L-seryl-[protein] + ATP = 3-O-(5'-adenylyl)-L-seryl-[protein] + diphosphate. It catalyses the reaction L-threonyl-[protein] + ATP = 3-O-(5'-adenylyl)-L-threonyl-[protein] + diphosphate. It carries out the reaction L-tyrosyl-[protein] + ATP = O-(5'-adenylyl)-L-tyrosyl-[protein] + diphosphate. The enzyme catalyses L-histidyl-[protein] + UTP = N(tele)-(5'-uridylyl)-L-histidyl-[protein] + diphosphate. The catalysed reaction is L-seryl-[protein] + UTP = O-(5'-uridylyl)-L-seryl-[protein] + diphosphate. It catalyses the reaction L-tyrosyl-[protein] + UTP = O-(5'-uridylyl)-L-tyrosyl-[protein] + diphosphate. In terms of biological role, nucleotidyltransferase involved in the post-translational modification of proteins. It can catalyze the addition of adenosine monophosphate (AMP) or uridine monophosphate (UMP) to a protein, resulting in modifications known as AMPylation and UMPylation. In Salmonella arizonae (strain ATCC BAA-731 / CDC346-86 / RSK2980), this protein is Protein nucleotidyltransferase YdiU.